The sequence spans 169 residues: Transmembrane protein 89 (169 aa).

The signal sequence occupies residues 1 to 22; it reads MLYTLLLVPSLFLLVMPVPSQG. At 23–75 the chain is on the extracellular side; sequence WSRPLWYQVGLDLQPWGCQPNSPDIWGCQPNSLDSCKNSLGCPGYWLGLGGNR. The chain crosses the membrane as a helical span at residues 76–96; sequence IYPVAGVTITTTMLLVVSRVI. Residues 97–169 are Cytoplasmic-facing; that stretch reads VHRWRAKVAK…QIKGSPPQSG (73 aa).

The protein localises to the membrane. The protein is Transmembrane protein 89 (Tmem89) of Mus musculus (Mouse).